We begin with the raw amino-acid sequence, 274 residues long: Large ribosomal subunit protein uL2 (274 aa).

Disordered regions lie at residues 37–59 (KAKNGGRNNNGRITTRHKGGGHK) and 222–262 (GAAM…RTNK). Over residues 50-59 (TTRHKGGGHK) the composition is skewed to basic residues.

The protein belongs to the universal ribosomal protein uL2 family. In terms of assembly, part of the 50S ribosomal subunit. Forms a bridge to the 30S subunit in the 70S ribosome.

In terms of biological role, one of the primary rRNA binding proteins. Required for association of the 30S and 50S subunits to form the 70S ribosome, for tRNA binding and peptide bond formation. It has been suggested to have peptidyltransferase activity; this is somewhat controversial. Makes several contacts with the 16S rRNA in the 70S ribosome. This Alcanivorax borkumensis (strain ATCC 700651 / DSM 11573 / NCIMB 13689 / SK2) protein is Large ribosomal subunit protein uL2.